We begin with the raw amino-acid sequence, 242 residues long: NADH-quinone oxidoreductase subunit C (242 aa).

Residues 67 to 101 (VVNSVGLGHKEQGAKPITNRRTTSDNVGESKSIDY) form an insert region.

Belongs to the complex I 30 kDa subunit family. In terms of assembly, NDH-1 is composed of 14 different subunits. Subunits NuoB, C, D, E, F, and G constitute the peripheral sector of the complex.

The protein resides in the cell inner membrane. It catalyses the reaction a quinone + NADH + 5 H(+)(in) = a quinol + NAD(+) + 4 H(+)(out). Its function is as follows. NDH-1 shuttles electrons from NADH, via FMN and iron-sulfur (Fe-S) centers, to quinones in the respiratory chain. The immediate electron acceptor for the enzyme in this species is believed to be ubiquinone. Couples the redox reaction to proton translocation (for every two electrons transferred, four hydrogen ions are translocated across the cytoplasmic membrane), and thus conserves the redox energy in a proton gradient. In Rickettsia conorii (strain ATCC VR-613 / Malish 7), this protein is NADH-quinone oxidoreductase subunit C.